The chain runs to 298 residues: Acetylglutamate kinase (298 aa).

Substrate contacts are provided by residues 69–70 (GG), Arg91, and Asn196.

Belongs to the acetylglutamate kinase family. ArgB subfamily.

It localises to the cytoplasm. It catalyses the reaction N-acetyl-L-glutamate + ATP = N-acetyl-L-glutamyl 5-phosphate + ADP. It participates in amino-acid biosynthesis; L-arginine biosynthesis; N(2)-acetyl-L-ornithine from L-glutamate: step 2/4. Functionally, catalyzes the ATP-dependent phosphorylation of N-acetyl-L-glutamate. In Granulibacter bethesdensis (strain ATCC BAA-1260 / CGDNIH1), this protein is Acetylglutamate kinase.